The chain runs to 231 residues: Protein OPG061 (231 aa).

It belongs to the orthopoxvirus OPG058 family.

Its subcellular location is the host nucleus. The protein resides in the host nucleolus. This chain is Protein OPG061 (OPG061), found in Homo sapiens (Human).